Consider the following 245-residue polypeptide: Carboxy-S-adenosyl-L-methionine synthase (245 aa).

S-adenosyl-L-methionine-binding positions include Tyr42, 67–69 (GCS), 92–93 (DN), 120–121 (DI), Asn135, and Arg202.

This sequence belongs to the class I-like SAM-binding methyltransferase superfamily. Cx-SAM synthase family. Homodimer.

The enzyme catalyses prephenate + S-adenosyl-L-methionine = carboxy-S-adenosyl-L-methionine + 3-phenylpyruvate + H2O. Functionally, catalyzes the conversion of S-adenosyl-L-methionine (SAM) to carboxy-S-adenosyl-L-methionine (Cx-SAM). In Vibrio vulnificus (strain YJ016), this protein is Carboxy-S-adenosyl-L-methionine synthase.